Reading from the N-terminus, the 693-residue chain is Elongation factor G (693 aa).

The tr-type G domain occupies 6 to 286 (KYTRNIGIAA…AICRYLPSPI (281 aa)). GTP-binding positions include 15–22 (AHIDAGKT), 83–87 (DTPGH), and 137–140 (NKMD).

This sequence belongs to the TRAFAC class translation factor GTPase superfamily. Classic translation factor GTPase family. EF-G/EF-2 subfamily.

The protein resides in the cytoplasm. Catalyzes the GTP-dependent ribosomal translocation step during translation elongation. During this step, the ribosome changes from the pre-translocational (PRE) to the post-translocational (POST) state as the newly formed A-site-bound peptidyl-tRNA and P-site-bound deacylated tRNA move to the P and E sites, respectively. Catalyzes the coordinated movement of the two tRNA molecules, the mRNA and conformational changes in the ribosome. The polypeptide is Elongation factor G (Karelsulcia muelleri (strain GWSS) (Sulcia muelleri)).